A 316-amino-acid chain; its full sequence is Golgi to ER traffic protein 2 (316 aa).

The tract at residues 1–75 (MATELSDAEK…SDEEVEKSTK (75 aa)) is disordered. The Cytoplasmic portion of the chain corresponds to 1–167 (MATELSDAEK…LKYYKFKVSK (167 aa)). The span at 7–19 (DAEKRKLLRERRQ) shows a compositional bias: basic and acidic residues. 2 stretches are compositionally biased toward polar residues: residues 22-48 (FSNGGASSRLNKITGQQQNSFLSSTSV) and 56-65 (PSGNKKSSNV). Residues 168–187 (LKSYIILIKWALLAPYVYFI) traverse the membrane as a helical segment. Residues 188-209 (MHPNPTVLQASNLLSQIVERSN) are Lumenal-facing. The helical transmembrane segment at 210-229 (FFSIFTGLEIVFISIYYQML) threads the bilayer. Residues 230-276 (KKLQRDNNVTATQNAGGILKYLTMIPEGILPIRNIQGKIGLALEYFD) are Cytoplasmic-facing. Residues 277–297 (VASMYVTDICFVLVLFGVMKY) form a helical membrane-spanning segment. Residues 298–316 (YHSSFPISVPIEPPIAGIQ) lie on the Lumenal side of the membrane.

Belongs to the GET2 family. Component of the Golgi to ER traffic (GET) complex, which is composed of GET1, GET2 and GET3. Within the complex, GET1 and GET2 form a heterotetramer which is stabilized by phosphatidylinositol binding and which binds to the GET3 homodimer.

The protein localises to the endoplasmic reticulum membrane. Its subcellular location is the golgi apparatus membrane. In terms of biological role, required for the post-translational delivery of tail-anchored (TA) proteins to the endoplasmic reticulum. Together with GET1, acts as a membrane receptor for soluble GET3, which recognizes and selectively binds the transmembrane domain of TA proteins in the cytosol. The GET complex cooperates with the HDEL receptor ERD2 to mediate the ATP-dependent retrieval of resident ER proteins that contain a C-terminal H-D-E-L retention signal from the Golgi to the ER. The sequence is that of Golgi to ER traffic protein 2 from Kluyveromyces lactis (strain ATCC 8585 / CBS 2359 / DSM 70799 / NBRC 1267 / NRRL Y-1140 / WM37) (Yeast).